The sequence spans 768 residues: Ral guanine nucleotide dissociation stimulator-like 1 (768 aa).

One can recognise an N-terminal Ras-GEF domain in the interval 65–196 (KIRTIKAGTL…RAQNLLEQFQ (132 aa)). Residues 232-501 (SEDLVAEQLT…YALSCEIEAA (270 aa)) form the Ras-GEF domain. Phosphoserine is present on serine 520. A disordered region spans residues 528–623 (MITSPTPTKE…PPSCNNNPKI (96 aa)). 3 stretches are compositionally biased toward low complexity: residues 541–561 (STAS…SCES), 586–596 (ESSSSCSSIHS), and 605–621 (SSLI…NNNP). The region spanning 648 to 735 (DTCIIRISVE…FDFILRKKNS (88 aa)) is the Ras-associating domain.

Interacts with Ras. Expressed in a wide variety of tissues with strong expression being seen in the heart, brain, kidney, spleen and testis.

In terms of biological role, probable guanine nucleotide exchange factor. This is Ral guanine nucleotide dissociation stimulator-like 1 (RGL1) from Homo sapiens (Human).